The primary structure comprises 596 residues: Elongation factor 4 (596 aa).

Residues 2-183 (KNIRNFSIIA…AIVDRIPAPV (182 aa)) form the tr-type G domain. Residues 14 to 19 (DHGKST) and 130 to 133 (NKID) contribute to the GTP site.

The protein belongs to the TRAFAC class translation factor GTPase superfamily. Classic translation factor GTPase family. LepA subfamily.

The protein resides in the cell inner membrane. The catalysed reaction is GTP + H2O = GDP + phosphate + H(+). In terms of biological role, required for accurate and efficient protein synthesis under certain stress conditions. May act as a fidelity factor of the translation reaction, by catalyzing a one-codon backward translocation of tRNAs on improperly translocated ribosomes. Back-translocation proceeds from a post-translocation (POST) complex to a pre-translocation (PRE) complex, thus giving elongation factor G a second chance to translocate the tRNAs correctly. Binds to ribosomes in a GTP-dependent manner. This chain is Elongation factor 4, found in Sulfurimonas denitrificans (strain ATCC 33889 / DSM 1251) (Thiomicrospira denitrificans (strain ATCC 33889 / DSM 1251)).